Consider the following 215-residue polypeptide: Leucyl/phenylalanyl-tRNA--protein transferase (215 aa).

This sequence belongs to the L/F-transferase family.

The protein resides in the cytoplasm. It catalyses the reaction N-terminal L-lysyl-[protein] + L-leucyl-tRNA(Leu) = N-terminal L-leucyl-L-lysyl-[protein] + tRNA(Leu) + H(+). It carries out the reaction N-terminal L-arginyl-[protein] + L-leucyl-tRNA(Leu) = N-terminal L-leucyl-L-arginyl-[protein] + tRNA(Leu) + H(+). The enzyme catalyses L-phenylalanyl-tRNA(Phe) + an N-terminal L-alpha-aminoacyl-[protein] = an N-terminal L-phenylalanyl-L-alpha-aminoacyl-[protein] + tRNA(Phe). Its function is as follows. Functions in the N-end rule pathway of protein degradation where it conjugates Leu, Phe and, less efficiently, Met from aminoacyl-tRNAs to the N-termini of proteins containing an N-terminal arginine or lysine. The protein is Leucyl/phenylalanyl-tRNA--protein transferase of Campylobacter jejuni (strain RM1221).